Here is a 102-residue protein sequence, read N- to C-terminus: Large ribosomal subunit protein bL21 (102 aa).

It belongs to the bacterial ribosomal protein bL21 family. Part of the 50S ribosomal subunit. Contacts protein L20.

Functionally, this protein binds to 23S rRNA in the presence of protein L20. The protein is Large ribosomal subunit protein bL21 of Bifidobacterium longum subsp. infantis (strain ATCC 15697 / DSM 20088 / JCM 1222 / NCTC 11817 / S12).